The following is an 87-amino-acid chain: NADH dehydrogenase [ubiquinone] 1 alpha subcomplex subunit 4-like 2 (87 aa).

The protein belongs to the complex I NDUFA4 subunit family.

In Homo sapiens (Human), this protein is NADH dehydrogenase [ubiquinone] 1 alpha subcomplex subunit 4-like 2 (NDUFA4L2).